The following is a 299-amino-acid chain: Peroxisomal biogenesis factor 19 (299 aa).

The interval 1 to 63 (MAAAEGDGGV…SPGDTAKDAL (63 aa)) is disordered. Residue A2 is modified to N-acetylalanine. The interval 2 to 56 (AAAEGDGGVRAEADRELEELLESALDDFDKAKPSPAPPPTTTAPDASGPQKRSPG) is docking to the peroxisome membrane and binding to PEX3. The necessary for PEX19 function on peroxisome biogenesis stretch occupies residues 2-91 (AAAEGDGGVR…QATAEFEKAM (90 aa)). The segment covering 16–27 (RELEELLESALD) has biased composition (acidic residues). Phosphoserine occurs at positions 35, 54, and 66. A Phosphothreonine modification is found at T236. At C296 the chain carries Cysteine methyl ester. C296 carries the S-farnesyl cysteine lipid modification. Residues 297–299 (LIM) constitute a propeptide, removed in mature form.

It belongs to the peroxin-19 family. Interacts with a broad range of peroxisomal membrane proteins, including PEX3, PEX10, PEX11A, PEX11B, PEX12, PEX13, PEX14 and PEX16, PXMP2/PMP22, PXMP4/PMP24, SLC25A17/PMP34, ABCD1/ALDP, ABCD2/ALDRP, and ABCD3/PMP70. Also interacts with the tumor suppressor CDKN2A/p19ARF.

It localises to the cytoplasm. The protein localises to the peroxisome membrane. Its function is as follows. Necessary for early peroxisomal biogenesis. Acts both as a cytosolic chaperone and as an import receptor for peroxisomal membrane proteins (PMPs). Binds and stabilizes newly synthesized PMPs in the cytoplasm by interacting with their hydrophobic membrane-spanning domains, and targets them to the peroxisome membrane by binding to the integral membrane protein PEX3. Excludes CDKN2A from the nucleus and prevents its interaction with MDM2, which results in active degradation of TP53. This Bos taurus (Bovine) protein is Peroxisomal biogenesis factor 19 (PEX19).